The chain runs to 491 residues: Glycogen synthase (491 aa).

Lys15 contributes to the ADP-alpha-D-glucose binding site.

This sequence belongs to the glycosyltransferase 1 family. Bacterial/plant glycogen synthase subfamily.

The catalysed reaction is [(1-&gt;4)-alpha-D-glucosyl](n) + ADP-alpha-D-glucose = [(1-&gt;4)-alpha-D-glucosyl](n+1) + ADP + H(+). The protein operates within glycan biosynthesis; glycogen biosynthesis. Its function is as follows. Synthesizes alpha-1,4-glucan chains using ADP-glucose. The protein is Glycogen synthase of Treponema denticola (strain ATCC 35405 / DSM 14222 / CIP 103919 / JCM 8153 / KCTC 15104).